We begin with the raw amino-acid sequence, 728 residues long: 1,4-alpha-glucan branching enzyme GlgB (728 aa).

Catalysis depends on Asp405, which acts as the Nucleophile. Glu458 (proton donor) is an active-site residue.

This sequence belongs to the glycosyl hydrolase 13 family. GlgB subfamily. As to quaternary structure, monomer.

It catalyses the reaction Transfers a segment of a (1-&gt;4)-alpha-D-glucan chain to a primary hydroxy group in a similar glucan chain.. Its pathway is glycan biosynthesis; glycogen biosynthesis. In terms of biological role, catalyzes the formation of the alpha-1,6-glucosidic linkages in glycogen by scission of a 1,4-alpha-linked oligosaccharide from growing alpha-1,4-glucan chains and the subsequent attachment of the oligosaccharide to the alpha-1,6 position. This is 1,4-alpha-glucan branching enzyme GlgB from Escherichia coli O157:H7.